Here is a 502-residue protein sequence, read N- to C-terminus: Lysine--tRNA ligase (502 aa).

The Mg(2+) site is built by E411 and E418.

This sequence belongs to the class-II aminoacyl-tRNA synthetase family. In terms of assembly, homodimer. Mg(2+) is required as a cofactor.

The protein resides in the cytoplasm. The catalysed reaction is tRNA(Lys) + L-lysine + ATP = L-lysyl-tRNA(Lys) + AMP + diphosphate. In Clostridium tetani (strain Massachusetts / E88), this protein is Lysine--tRNA ligase.